A 267-amino-acid chain; its full sequence is Tryptophan synthase alpha chain (267 aa).

Catalysis depends on proton acceptor residues glutamate 49 and aspartate 60.

The protein belongs to the TrpA family. Tetramer of two alpha and two beta chains.

It catalyses the reaction (1S,2R)-1-C-(indol-3-yl)glycerol 3-phosphate + L-serine = D-glyceraldehyde 3-phosphate + L-tryptophan + H2O. It functions in the pathway amino-acid biosynthesis; L-tryptophan biosynthesis; L-tryptophan from chorismate: step 5/5. Functionally, the alpha subunit is responsible for the aldol cleavage of indoleglycerol phosphate to indole and glyceraldehyde 3-phosphate. The sequence is that of Tryptophan synthase alpha chain from Acidothermus cellulolyticus (strain ATCC 43068 / DSM 8971 / 11B).